Here is a 570-residue protein sequence, read N- to C-terminus: Proline--tRNA ligase (570 aa).

It belongs to the class-II aminoacyl-tRNA synthetase family. ProS type 1 subfamily. As to quaternary structure, homodimer.

It localises to the cytoplasm. The catalysed reaction is tRNA(Pro) + L-proline + ATP = L-prolyl-tRNA(Pro) + AMP + diphosphate. Catalyzes the attachment of proline to tRNA(Pro) in a two-step reaction: proline is first activated by ATP to form Pro-AMP and then transferred to the acceptor end of tRNA(Pro). As ProRS can inadvertently accommodate and process non-cognate amino acids such as alanine and cysteine, to avoid such errors it has two additional distinct editing activities against alanine. One activity is designated as 'pretransfer' editing and involves the tRNA(Pro)-independent hydrolysis of activated Ala-AMP. The other activity is designated 'posttransfer' editing and involves deacylation of mischarged Ala-tRNA(Pro). The misacylated Cys-tRNA(Pro) is not edited by ProRS. This is Proline--tRNA ligase from Clostridium tetani (strain Massachusetts / E88).